Consider the following 1201-residue polypeptide: Kinesin-like protein costa (1201 aa).

One can recognise a Kinesin motor domain in the interval 4 to 391 (PIQVAVRIFP…LQFAFKVQCV (388 aa)). Residues 23 to 92 (SFGPTEPKKD…NGNDSGQKDY (70 aa)) are disordered. A compositionally biased stretch (basic and acidic residues) spans 28–56 (EPKKDAQAVDEGADSKDSEAQVPAAEKDN). A compositionally biased stretch (polar residues) spans 57 to 75 (PSISETDPNGNAEQDSAAD). 175 to 182 (GQRGQGKS) lines the ATP pocket. 3 disordered regions span residues 502 to 536 (AEEPEDVNSEAANSESPNSDNENDTDNESHRPDLD), 565 to 606 (HPKA…GASL), and 618 to 639 (ASQQPPPPIDPESVVDPLESSS). The span at 510-521 (SEAANSESPNSD) shows a compositional bias: low complexity. 2 positions are modified to phosphoserine: serine 599 and serine 605. 2 coiled-coil regions span residues 652-821 (AATA…ELVK) and 968-1001 (TKVIDLRDSSRKLELQLVQLERERDAWEWKERVL).

The protein belongs to the TRAFAC class myosin-kinesin ATPase superfamily. Kinesin family. KIF27 subfamily. Homodimer (Potential). Binds microtubules. Interacts with ci, smo, sgg, CkIalpha and protein kinase A catalytic subunit. Interacts (via kinesin motor domain) with Ubr3. In terms of processing, polyubiquitinated by Ubr3, which leads to proteasomal degradation.

It is found in the cytoplasm. The protein resides in the cytoskeleton. Functionally, regulates cubitus interruptus (ci) processing by recruiting multiple kinases to promote its efficient phosphorylation. Scaffolds multiple kinases and ci into proximity to promote its hyperphosphorylation, which then targets it for SCFSlimb/proteasome-mediated processing to generate its repressor form. Hh signaling inhibits ci phosphorylation by interfering with the cos-ci-kinases complex formation. Negatively regulates hh-signaling pathways during various processes, including photoreceptor differentiation. May negatively regulate a hh-signaling pathway which functions in the intestinal immune response to bacterial uracil by activating the Duox-dependent production of reactive oxygen species (ROS). This chain is Kinesin-like protein costa (cos), found in Drosophila melanogaster (Fruit fly).